The primary structure comprises 420 residues: Type II methyltransferase M.HgiCI (420 aa).

The SAM-dependent MTase C5-type domain occupies 2 to 417; it reads LKFIDLFAGI…LDLFKSADLA (416 aa). The active site involves Cys-75.

Belongs to the class I-like SAM-binding methyltransferase superfamily. C5-methyltransferase family.

It catalyses the reaction a 2'-deoxycytidine in DNA + S-adenosyl-L-methionine = a 5-methyl-2'-deoxycytidine in DNA + S-adenosyl-L-homocysteine + H(+). Functionally, a methylase that recognizes the double-stranded sequence 5'-GGYRCC-3', methylates C-5 on both strands, and protects the DNA from cleavage by the HgiCI endonuclease. The sequence is that of Type II methyltransferase M.HgiCI (hgiCIM) from Herpetosiphon aurantiacus (Herpetosiphon giganteus).